We begin with the raw amino-acid sequence, 178 residues long: MLEGVIRESITKANAKALKKDGYLIANIYGKGVENVNCAFKLNPFIKYLKEKKHLIFPVKLGDKTFEVVVQEYQKNPVTNELIHVDLLAVTKGVKSKFKVPVKHQGTPVGLKNKGILMLSKKRISVECAPEHLPDHYLVDVAPLDVNESILVRDLEKHENVKILDHDSIAVIGVIKAK.

It belongs to the bacterial ribosomal protein bL25 family. CTC subfamily. As to quaternary structure, part of the 50S ribosomal subunit; part of the 5S rRNA/L5/L18/L25 subcomplex. Contacts the 5S rRNA. Binds to the 5S rRNA independently of L5 and L18.

Functionally, this is one of the proteins that binds to the 5S RNA in the ribosome where it forms part of the central protuberance. The chain is Large ribosomal subunit protein bL25 from Helicobacter pylori (strain J99 / ATCC 700824) (Campylobacter pylori J99).